The following is a 434-amino-acid chain: CCA tRNA nucleotidyltransferase 1, mitochondrial (434 aa).

Residues 1-41 (MQSVLYPWHRQVLRCSWSRLCLLKRYLFTMKLQSPEFQSLF) constitute a mitochondrion transit peptide. Positions 64 and 67 each coordinate ATP. CTP contacts are provided by Gly-64 and Arg-67. Mg(2+)-binding residues include Asp-77 and Asp-79. ATP is bound by residues Arg-151, Asp-194, Arg-197, Arg-200, and Arg-203. CTP contacts are provided by Arg-151, Asp-194, Arg-197, Arg-200, and Arg-203. At Ser-400 the chain carries Phosphoserine. At Lys-402 the chain carries N6-acetyllysine.

The protein belongs to the tRNA nucleotidyltransferase/poly(A) polymerase family. Monomer, and homodimer. It depends on Mg(2+) as a cofactor.

The protein localises to the mitochondrion. The protein resides in the cytoplasm. Its subcellular location is the nucleus. It carries out the reaction a tRNA precursor + 2 CTP + ATP = a tRNA with a 3' CCA end + 3 diphosphate. The enzyme catalyses a tRNA with a 3' CCA end + 2 CTP + ATP = a tRNA with a 3' CCACCA end + 3 diphosphate. Functionally, nucleotidyltransferase that catalyzes the addition and repair of the essential 3'-terminal CCA sequence in tRNAs, which is necessary for the attachment of amino acids to the 3' terminus of tRNA molecules, using CTP and ATP as substrates. tRNA 3'-terminal CCA addition is required both for tRNA processing and repair. Promotes tRNA repair and recycling downstream of the ribosome-associated quality control (RQC) pathway by mediating addition of the tRNA 3'-terminal CCA following cleavage by ANKZF1 and repair by ELAC1. Also involved in tRNA surveillance by mediating tandem CCA addition to generate a CCACCA at the 3' terminus of unstable tRNAs and tRNA-like transcripts. While stable tRNAs receive only 3'-terminal CCA, unstable tRNAs beginning with GG are marked with CCACCA and rapidly degraded. The structural flexibility of RNA controls the choice between CCA versus CCACCA addition: following the first CCA addition cycle, nucleotide-binding to the active site triggers a clockwise screw motion, producing torque on the RNA. This ejects stable RNAs, whereas unstable RNAs are refolded while bound to the enzyme and subjected to a second CCA catalytic cycle. This Mus musculus (Mouse) protein is CCA tRNA nucleotidyltransferase 1, mitochondrial (Trnt1).